The sequence spans 308 residues: Ribosomal RNA small subunit methyltransferase H (308 aa).

S-adenosyl-L-methionine is bound by residues 32–34 (AGH), D52, F79, D100, and Q107.

It belongs to the methyltransferase superfamily. RsmH family.

The protein localises to the cytoplasm. It catalyses the reaction cytidine(1402) in 16S rRNA + S-adenosyl-L-methionine = N(4)-methylcytidine(1402) in 16S rRNA + S-adenosyl-L-homocysteine + H(+). Specifically methylates the N4 position of cytidine in position 1402 (C1402) of 16S rRNA. The sequence is that of Ribosomal RNA small subunit methyltransferase H from Mycoplasma mycoides subsp. mycoides SC (strain CCUG 32753 / NCTC 10114 / PG1).